The primary structure comprises 680 residues: Probable inactive DNA (cytosine-5)-methyltransferase DRM3 (680 aa).

The tract at residues 1–24 (MVKVEDDVEGSGINASVGDLRDAA) is disordered. In terms of domain architecture, UBA 1 spans 45-86 (SSSSHVRSQFIGMGFSPMLVDRVLQKHGDRDSDTILEALLSQ). Residues 91-113 (KSGSESGSLGDLFDSDNEENSSH) form a disordered region. Residues 194 to 235 (SLFGVMDKTLHLLQMGFTEEEVSSVIDKAGPEATVLELADTI) form the UBA 2 domain. Residues 336 to 663 (IRRNVRSDVA…QRVKHIMGRL (328 aa)) form the SAM-dependent MTase DRM-type domain.

The protein belongs to the class I-like SAM-binding methyltransferase superfamily. DRM-methyltransferase family.

It is found in the nucleus. Its function is as follows. Involved in de novo DNA methylation. Involved in RNA-directed DNA methylation (RdDM). In Oryza sativa subsp. japonica (Rice), this protein is Probable inactive DNA (cytosine-5)-methyltransferase DRM3.